The primary structure comprises 72 residues: Long neurotoxin 1 (72 aa).

5 disulfide bridges follow: Cys3-Cys21, Cys14-Cys42, Cys27-Cys31, Cys46-Cys57, and Cys58-Cys63.

Belongs to the three-finger toxin family. Long-chain subfamily. Type II alpha-neurotoxin sub-subfamily. As to expression, expressed by the venom gland.

It localises to the secreted. In terms of biological role, binds with high affinity to muscular (alpha-1/CHRNA1) and neuronal (alpha-7/CHRNA7) nicotinic acetylcholine receptor (nAChR) and inhibits acetylcholine from binding to the receptor, thereby impairing neuromuscular and neuronal transmission. In Naja anchietae (Anchieta's cobra), this protein is Long neurotoxin 1.